Here is a 627-residue protein sequence, read N- to C-terminus: 1-deoxy-D-xylulose-5-phosphate synthase (627 aa).

Residues H75 and 116–118 contribute to the thiamine diphosphate site; that span reads AHS. D147 is a binding site for Mg(2+). Thiamine diphosphate contacts are provided by residues 148-149, N177, Y284, and E366; that span reads GA. Residue N177 coordinates Mg(2+).

Belongs to the transketolase family. DXPS subfamily. In terms of assembly, homodimer. Mg(2+) is required as a cofactor. Requires thiamine diphosphate as cofactor.

It catalyses the reaction D-glyceraldehyde 3-phosphate + pyruvate + H(+) = 1-deoxy-D-xylulose 5-phosphate + CO2. It participates in metabolic intermediate biosynthesis; 1-deoxy-D-xylulose 5-phosphate biosynthesis; 1-deoxy-D-xylulose 5-phosphate from D-glyceraldehyde 3-phosphate and pyruvate: step 1/1. Functionally, catalyzes the acyloin condensation reaction between C atoms 2 and 3 of pyruvate and glyceraldehyde 3-phosphate to yield 1-deoxy-D-xylulose-5-phosphate (DXP). This is 1-deoxy-D-xylulose-5-phosphate synthase from Bordetella petrii (strain ATCC BAA-461 / DSM 12804 / CCUG 43448).